Reading from the N-terminus, the 646-residue chain is ATP-dependent zinc metalloprotease FtsH (646 aa).

Residues 1 to 27 (MTNNQTDRPRPPGPESRRFDNNDKNNR) form a disordered region. Over 1–35 (MTNNQTDRPRPPGPESRRFDNNDKNNRNRWGPIPS) the chain is Cytoplasmic. Residues 7–26 (DRPRPPGPESRRFDNNDKNN) are compositionally biased toward basic and acidic residues. A helical transmembrane segment spans residues 36 to 56 (WAWIVLIVALLLNWLVAPILF). Residues 57–144 (PEGKGAVSIP…QPESSTRSLL (88 aa)) lie on the Extracellular side of the membrane. A helical transmembrane segment spans residues 145-165 (LSILISFGPTILFFLLFLWLI). The Cytoplasmic segment spans residues 166 to 646 (SKAQSSQQGL…GLGEKQPEPA (481 aa)). Residue 237–244 (GPPGTGKT) participates in ATP binding. A Zn(2+)-binding site is contributed by His459. Residue Glu460 is part of the active site. Residues His463 and Asp535 each contribute to the Zn(2+) site.

The protein in the central section; belongs to the AAA ATPase family. This sequence in the C-terminal section; belongs to the peptidase M41 family. In terms of assembly, homohexamer. Zn(2+) is required as a cofactor.

It localises to the cell membrane. Its function is as follows. Acts as a processive, ATP-dependent zinc metallopeptidase for both cytoplasmic and membrane proteins. Plays a role in the quality control of integral membrane proteins. The polypeptide is ATP-dependent zinc metalloprotease FtsH (Thermobaculum terrenum (strain ATCC BAA-798 / CCMEE 7001 / YNP1)).